A 106-amino-acid polypeptide reads, in one-letter code: Tripartite terminase subunit 2 (106 aa).

This sequence belongs to the herpesviridae TRM2 protein family. Associates with TRM1 and TRM3 to form the tripartite terminase complex.

The protein localises to the host nucleus. Its function is as follows. Component of the molecular motor that translocates viral genomic DNA in empty capsid during DNA packaging. Forms a tripartite terminase complex together with TRM1 and TRM3 in the host cytoplasm. Once the complex reaches the host nucleus, it interacts with the capsid portal vertex. This portal forms a ring in which genomic DNA is translocated into the capsid. The protein is Tripartite terminase subunit 2 of Human herpesvirus 6A (strain Uganda-1102) (HHV-6 variant A).